The primary structure comprises 387 residues: Phosphoglycerate kinase (387 aa).

Residues 21-23 (DLN), R36, 59-62 (HLGR), R113, and R146 contribute to the substrate site. Residues K197, E314, and 340–343 (GGDT) contribute to the ATP site.

This sequence belongs to the phosphoglycerate kinase family. Monomer.

It localises to the cytoplasm. The enzyme catalyses (2R)-3-phosphoglycerate + ATP = (2R)-3-phospho-glyceroyl phosphate + ADP. It functions in the pathway carbohydrate degradation; glycolysis; pyruvate from D-glyceraldehyde 3-phosphate: step 2/5. The polypeptide is Phosphoglycerate kinase (Cronobacter sakazakii (strain ATCC BAA-894) (Enterobacter sakazakii)).